Reading from the N-terminus, the 290-residue chain is 33 kDa chaperonin (290 aa).

Cystine bridges form between C235/C237 and C268/C271.

This sequence belongs to the HSP33 family. Under oxidizing conditions two disulfide bonds are formed involving the reactive cysteines. Under reducing conditions zinc is bound to the reactive cysteines and the protein is inactive.

It localises to the cytoplasm. In terms of biological role, redox regulated molecular chaperone. Protects both thermally unfolding and oxidatively damaged proteins from irreversible aggregation. Plays an important role in the bacterial defense system toward oxidative stress. The polypeptide is 33 kDa chaperonin (Streptococcus pneumoniae (strain JJA)).